The chain runs to 59 residues: Chromatin protein Cren7 (59 aa).

It belongs to the Cren7 family. As to quaternary structure, monomer. Post-translationally, methylated at multiple sites, to varying extents.

The protein resides in the chromosome. It localises to the cytoplasm. Functionally, a chromatin protein, binds double-stranded DNA without sequence specificity. Constrains negative DNA supercoils. In Sulfolobus acidocaldarius (strain ATCC 33909 / DSM 639 / JCM 8929 / NBRC 15157 / NCIMB 11770), this protein is Chromatin protein Cren7.